Consider the following 157-residue polypeptide: ATP synthase subunit b (157 aa).

The helical transmembrane segment at 7 to 29 threads the bilayer; sequence MFGQLIMFTMFTWFCMKFVWPPI.

This sequence belongs to the ATPase B chain family. In terms of assembly, F-type ATPases have 2 components, F(1) - the catalytic core - and F(0) - the membrane proton channel. F(1) has five subunits: alpha(3), beta(3), gamma(1), delta(1), epsilon(1). F(0) has three main subunits: a(1), b(2) and c(10-14). The alpha and beta chains form an alternating ring which encloses part of the gamma chain. F(1) is attached to F(0) by a central stalk formed by the gamma and epsilon chains, while a peripheral stalk is formed by the delta and b chains.

The protein localises to the cell inner membrane. In terms of biological role, f(1)F(0) ATP synthase produces ATP from ADP in the presence of a proton or sodium gradient. F-type ATPases consist of two structural domains, F(1) containing the extramembraneous catalytic core and F(0) containing the membrane proton channel, linked together by a central stalk and a peripheral stalk. During catalysis, ATP synthesis in the catalytic domain of F(1) is coupled via a rotary mechanism of the central stalk subunits to proton translocation. Component of the F(0) channel, it forms part of the peripheral stalk, linking F(1) to F(0). The sequence is that of ATP synthase subunit b from Ruthia magnifica subsp. Calyptogena magnifica.